A 412-amino-acid polypeptide reads, in one-letter code: NADH-quinone oxidoreductase subunit D (412 aa).

The protein belongs to the complex I 49 kDa subunit family. As to quaternary structure, NDH-1 is composed of 14 different subunits. Subunits NuoB, C, D, E, F, and G constitute the peripheral sector of the complex.

It is found in the cell inner membrane. The catalysed reaction is a quinone + NADH + 5 H(+)(in) = a quinol + NAD(+) + 4 H(+)(out). Its function is as follows. NDH-1 shuttles electrons from NADH, via FMN and iron-sulfur (Fe-S) centers, to quinones in the respiratory chain. The immediate electron acceptor for the enzyme in this species is believed to be a menaquinone. Couples the redox reaction to proton translocation (for every two electrons transferred, four hydrogen ions are translocated across the cytoplasmic membrane), and thus conserves the redox energy in a proton gradient. The chain is NADH-quinone oxidoreductase subunit D from Flavobacterium johnsoniae (strain ATCC 17061 / DSM 2064 / JCM 8514 / BCRC 14874 / CCUG 350202 / NBRC 14942 / NCIMB 11054 / UW101) (Cytophaga johnsonae).